Consider the following 215-residue polypeptide: Cytochrome b6 (215 aa).

The helical transmembrane segment at 32-52 (IFYCLGGITLTCFLVQVATGF) threads the bilayer. A heme c-binding site is contributed by Cys-35. Heme b is bound by residues His-86 and His-100. The next 3 membrane-spanning stretches (helical) occupy residues 90 to 110 (ASMM…TGGF), 116 to 136 (LTWV…VTGY), and 186 to 206 (LHTF…FPMI). Heme b is bound by residues His-187 and His-202.

The protein belongs to the cytochrome b family. PetB subfamily. In terms of assembly, the 4 large subunits of the cytochrome b6-f complex are cytochrome b6, subunit IV (17 kDa polypeptide, PetD), cytochrome f and the Rieske protein, while the 4 small subunits are PetG, PetL, PetM and PetN. The complex functions as a dimer. Requires heme b as cofactor. The cofactor is heme c.

The protein localises to the plastid. It localises to the chloroplast thylakoid membrane. Component of the cytochrome b6-f complex, which mediates electron transfer between photosystem II (PSII) and photosystem I (PSI), cyclic electron flow around PSI, and state transitions. The protein is Cytochrome b6 of Nicotiana tomentosiformis (Tobacco).